The chain runs to 898 residues: Pyruvate, phosphate dikinase (898 aa).

The N-terminal stretch occupies residues 1–355 (MAKWVYTFGA…LWMLQTRSGK (355 aa)). Arginine 96 is an ATP binding site. Residues 356–412 (RTAKSALKIAVDMAEEGLISKEEAVARIDPASLDQLLHPTIDPHARRDIIGSGLPAS) are linker 1. The tract at residues 413-511 (PGAATGEIVF…TLRKGDVITI (99 aa)) is central. At threonine 466 the chain carries Phosphothreonine; by PDRP1. The active-site Tele-phosphohistidine intermediate is histidine 468. Residues 512-546 (DGSSGQVLKGEIPMLQPELSGDFGKIMQWADASRR) form a linker 2 region. Residues 547 to 898 (MTVRTNAETP…VAEVQALAAS (352 aa)) are C-terminal. Positions 574, 630, 758, 779, 780, 781, and 782 each coordinate substrate. Glutamate 758 contacts Mg(2+). Residue aspartate 782 coordinates Mg(2+). The Proton donor role is filled by cysteine 844.

The protein belongs to the PEP-utilizing enzyme family. Homodimer. Mg(2+) serves as cofactor. In terms of processing, phosphorylation of Thr-466 in the dark inactivates the enzyme. Dephosphorylation upon light stimulation reactivates the enzyme.

It catalyses the reaction pyruvate + phosphate + ATP = phosphoenolpyruvate + AMP + diphosphate + H(+). Its activity is regulated as follows. Activated by light-induced dephosphorylation. Inhibited by dark-induced phosphorylation. Both reactions are catalyzed by PDRP1. Functionally, catalyzes the reversible phosphorylation of pyruvate and phosphate. This Rhizobium meliloti (strain 1021) (Ensifer meliloti) protein is Pyruvate, phosphate dikinase (ppdK).